A 61-amino-acid polypeptide reads, in one-letter code: Small ribosomal subunit protein uS14 (61 aa).

Zn(2+)-binding residues include Cys24, Cys27, Cys40, and Cys43.

This sequence belongs to the universal ribosomal protein uS14 family. Zinc-binding uS14 subfamily. As to quaternary structure, part of the 30S ribosomal subunit. Contacts proteins S3 and S10. Requires Zn(2+) as cofactor.

Its function is as follows. Binds 16S rRNA, required for the assembly of 30S particles and may also be responsible for determining the conformation of the 16S rRNA at the A site. This chain is Small ribosomal subunit protein uS14, found in Desulfosudis oleivorans (strain DSM 6200 / JCM 39069 / Hxd3) (Desulfococcus oleovorans).